A 219-amino-acid chain; its full sequence is Cytidylate kinase (219 aa).

15–23 (GPAASGKGT) contributes to the ATP binding site.

The protein belongs to the cytidylate kinase family. Type 1 subfamily.

It localises to the cytoplasm. It carries out the reaction CMP + ATP = CDP + ADP. The catalysed reaction is dCMP + ATP = dCDP + ADP. The protein is Cytidylate kinase of Brucella melitensis biotype 2 (strain ATCC 23457).